The sequence spans 511 residues: Bifunctional purine biosynthesis protein PurH (511 aa).

In terms of domain architecture, MGS-like spans 1 to 145; the sequence is MKKRALVSVS…KNHKFVSVIV (145 aa).

The protein belongs to the PurH family.

It catalyses the reaction (6R)-10-formyltetrahydrofolate + 5-amino-1-(5-phospho-beta-D-ribosyl)imidazole-4-carboxamide = 5-formamido-1-(5-phospho-D-ribosyl)imidazole-4-carboxamide + (6S)-5,6,7,8-tetrahydrofolate. The catalysed reaction is IMP + H2O = 5-formamido-1-(5-phospho-D-ribosyl)imidazole-4-carboxamide. Its pathway is purine metabolism; IMP biosynthesis via de novo pathway; 5-formamido-1-(5-phospho-D-ribosyl)imidazole-4-carboxamide from 5-amino-1-(5-phospho-D-ribosyl)imidazole-4-carboxamide (10-formyl THF route): step 1/1. It participates in purine metabolism; IMP biosynthesis via de novo pathway; IMP from 5-formamido-1-(5-phospho-D-ribosyl)imidazole-4-carboxamide: step 1/1. In Bacillus cereus (strain ATCC 10987 / NRS 248), this protein is Bifunctional purine biosynthesis protein PurH.